The sequence spans 142 residues: Protein CPn_0742/CP_0003/CPj0742/CpB0770 (142 aa).

The interval 115-142 (LHPTKESKRPKQKLSSTKKNKKKNWIPL) is disordered. Over residues 124 to 142 (PKQKLSSTKKNKKKNWIPL) the composition is skewed to basic residues.

It belongs to the chlamydial CPn_0742/CT_635/TC_0003 family.

The polypeptide is Protein CPn_0742/CP_0003/CPj0742/CpB0770 (Chlamydia pneumoniae (Chlamydophila pneumoniae)).